The sequence spans 132 residues: MTDDAVTGSQDDAEIEIRFNSDGLVPAIAQDADSGEVLMLAYVSPTALKRTRETGQAHYYSRSREELWKKGETSGHTQHIREIRADCDADTILYLVEQTGGACHTGHQSCFYRTLDGTEVTERVFDPETVYE.

Residue aspartate 86 participates in Mg(2+) binding. Position 87 (cysteine 87) interacts with Zn(2+). Aspartate 88 and aspartate 90 together coordinate Mg(2+). Residues cysteine 103 and cysteine 110 each contribute to the Zn(2+) site.

The protein belongs to the PRA-CH family. In terms of assembly, homodimer. Mg(2+) serves as cofactor. It depends on Zn(2+) as a cofactor.

Its subcellular location is the cytoplasm. It catalyses the reaction 1-(5-phospho-beta-D-ribosyl)-5'-AMP + H2O = 1-(5-phospho-beta-D-ribosyl)-5-[(5-phospho-beta-D-ribosylamino)methylideneamino]imidazole-4-carboxamide. Its pathway is amino-acid biosynthesis; L-histidine biosynthesis; L-histidine from 5-phospho-alpha-D-ribose 1-diphosphate: step 3/9. Catalyzes the hydrolysis of the adenine ring of phosphoribosyl-AMP. In Haloquadratum walsbyi (strain DSM 16790 / HBSQ001), this protein is Phosphoribosyl-AMP cyclohydrolase.